Consider the following 477-residue polypeptide: Dihydrolipoyl dehydrogenase (477 aa).

FAD-binding positions include 41–50, Lys59, Gly124, and 153–155; these read EKRGALGGTC and TGS. Residues Cys50 and Cys55 are joined by a disulfide bond. Residues 190–197, Glu213, Val248, and Gly282 each bind NAD(+); that span reads GGGVIGLE. FAD-binding positions include Asp323 and 330–333; that span reads MLAH. The Proton acceptor role is filled by His456.

Belongs to the class-I pyridine nucleotide-disulfide oxidoreductase family. In terms of assembly, homodimer. FAD serves as cofactor.

The catalysed reaction is N(6)-[(R)-dihydrolipoyl]-L-lysyl-[protein] + NAD(+) = N(6)-[(R)-lipoyl]-L-lysyl-[protein] + NADH + H(+). The chain is Dihydrolipoyl dehydrogenase (LPD) from Trypanosoma cruzi.